A 543-amino-acid polypeptide reads, in one-letter code: Carboxypeptidase Y homolog A (543 aa).

The first 17 residues, 1 to 17 (MKFLTTGLLATAALAAA), serve as a signal peptide directing secretion. The propeptide occupies 18 to 124 (QEQHVLQAED…KLHNYDLRVK (107 aa)). 5 disulfide bridges follow: Cys-179–Cys-419, Cys-313–Cys-327, Cys-337–Cys-360, Cys-344–Cys-353, and Cys-382–Cys-389. A glycan (N-linked (GlcNAc...) asparagine) is linked at Asn-210. Ser-266 is a catalytic residue. Residue Asp-458 is part of the active site. Residue Asn-509 is glycosylated (N-linked (GlcNAc...) asparagine). His-520 is an active-site residue.

Belongs to the peptidase S10 family.

It is found in the vacuole. The catalysed reaction is Release of a C-terminal amino acid with broad specificity.. Functionally, vacuolar carboxypeptidase involved in degradation of small peptides. Digests preferentially peptides containing an aliphatic or hydrophobic residue in P1' position, as well as methionine, leucine or phenylalanine in P1 position of ester substrate. This Trichophyton verrucosum (strain HKI 0517) protein is Carboxypeptidase Y homolog A (cpyA).